Here is a 350-residue protein sequence, read N- to C-terminus: tRNA uridine(34) hydroxylase (350 aa).

Residues 146-240 form the Rhodanese domain; the sequence is DDPDAVFIDM…YARRAREQGL (95 aa). The Cysteine persulfide intermediate role is filled by C200. The segment covering 319–328 has biased composition (basic and acidic residues); it reads RRRRAGRENG. Residues 319–350 are disordered; the sequence is RRRRAGRENGNKIFNKSRGRLNSKLSIPDPAE.

Belongs to the TrhO family.

The enzyme catalyses uridine(34) in tRNA + AH2 + O2 = 5-hydroxyuridine(34) in tRNA + A + H2O. Its function is as follows. Catalyzes oxygen-dependent 5-hydroxyuridine (ho5U) modification at position 34 in tRNAs. The protein is tRNA uridine(34) hydroxylase of Salmonella heidelberg (strain SL476).